A 426-amino-acid chain; its full sequence is 3-phosphoshikimate 1-carboxyvinyltransferase (426 aa).

Positions 22, 23, and 27 each coordinate 3-phosphoshikimate. Lys-22 is a binding site for phosphoenolpyruvate. Phosphoenolpyruvate contacts are provided by Gly-96 and Arg-124. 3-phosphoshikimate-binding residues include Ser-170, Ser-171, Gln-172, Ser-198, Asp-314, Asn-337, and Lys-341. A phosphoenolpyruvate-binding site is contributed by Gln-172. Asp-314 acts as the Proton acceptor in catalysis. Phosphoenolpyruvate contacts are provided by Arg-345, Arg-387, and Lys-412.

The protein belongs to the EPSP synthase family. As to quaternary structure, monomer.

It localises to the cytoplasm. It catalyses the reaction 3-phosphoshikimate + phosphoenolpyruvate = 5-O-(1-carboxyvinyl)-3-phosphoshikimate + phosphate. Its pathway is metabolic intermediate biosynthesis; chorismate biosynthesis; chorismate from D-erythrose 4-phosphate and phosphoenolpyruvate: step 6/7. In terms of biological role, catalyzes the transfer of the enolpyruvyl moiety of phosphoenolpyruvate (PEP) to the 5-hydroxyl of shikimate-3-phosphate (S3P) to produce enolpyruvyl shikimate-3-phosphate and inorganic phosphate. This is 3-phosphoshikimate 1-carboxyvinyltransferase from Shewanella halifaxensis (strain HAW-EB4).